We begin with the raw amino-acid sequence, 375 residues long: D-aspartate oxidase (375 aa).

The N-terminal stretch at methionine 1–alanine 17 is a signal peptide. FAD is bound by residues serine 9, leucine 12, aspartate 34, serine 51, and glycine 55. Asparagine 203 carries an N-linked (GlcNAc...) asparagine glycan. FAD is bound by residues arginine 322, glycine 354, and tyrosine 355.

This sequence belongs to the DAMOX/DASOX family. FAD is required as a cofactor.

It carries out the reaction D-aspartate + O2 + H2O = oxaloacetate + H2O2 + NH4(+). The catalysed reaction is D-glutamate + O2 + H2O = H2O2 + 2-oxoglutarate + NH4(+). Its function is as follows. Selectively catalyzes the oxidative deamination of acidic amino acids. Protects the organism from the toxicity of D-amino acids. Enables the organism to utilize D-amino acids as a source of nutrients. Enables the organism to utilize D-aspartate as a nitrogen source. The chain is D-aspartate oxidase (DDO) from Komagataella phaffii (strain GS115 / ATCC 20864) (Yeast).